A 459-amino-acid polypeptide reads, in one-letter code: UDP-N-acetylmuramoylalanine--D-glutamate ligase (459 aa).

120–126 contacts ATP; sequence GSNGKTT.

Belongs to the MurCDEF family.

The protein localises to the cytoplasm. It catalyses the reaction UDP-N-acetyl-alpha-D-muramoyl-L-alanine + D-glutamate + ATP = UDP-N-acetyl-alpha-D-muramoyl-L-alanyl-D-glutamate + ADP + phosphate + H(+). The protein operates within cell wall biogenesis; peptidoglycan biosynthesis. Its function is as follows. Cell wall formation. Catalyzes the addition of glutamate to the nucleotide precursor UDP-N-acetylmuramoyl-L-alanine (UMA). The polypeptide is UDP-N-acetylmuramoylalanine--D-glutamate ligase (Lactobacillus helveticus (strain DPC 4571)).